A 305-amino-acid polypeptide reads, in one-letter code: uncharacterized protein (305 aa).

The disordered stretch occupies residues 208 to 236 (SYAQSPAVKKKKWRHSGGKKNNPRENHID). Basic residues predominate over residues 215–225 (VKKKKWRHSGG).

This is an uncharacterized protein from Bacillus subtilis (strain 168).